A 297-amino-acid chain; its full sequence is tRNA (guanine(37)-N(1))/4-demethylwyosine(37)-methyltransferase Taw22 (297 aa).

S-adenosyl-L-methionine is bound by residues Arg-89, Phe-106, and 128 to 129; that span reads EL.

This sequence belongs to the class I-like SAM-binding methyltransferase superfamily. TRM5/TYW2 family.

Its subcellular location is the cytoplasm. The catalysed reaction is guanosine(37) in tRNA + S-adenosyl-L-methionine = N(1)-methylguanosine(37) in tRNA + S-adenosyl-L-homocysteine + H(+). It catalyses the reaction 4-demethylwyosine(37) in tRNA(Phe) + S-adenosyl-L-methionine = isowyosine(37) in tRNA(Phe) + S-adenosyl-L-homocysteine + H(+). Functionally, catalyzes both the N1-methylation of guanosine and the C7-methylation of 4-demethylwyosine (imG-14) at position 37 in tRNA(Phe). The sequence is that of tRNA (guanine(37)-N(1))/4-demethylwyosine(37)-methyltransferase Taw22 from Nanoarchaeum equitans (strain Kin4-M).